The sequence spans 204 residues: Elongation factor Ts (204 aa).

The involved in Mg(2+) ion dislocation from EF-Tu stretch occupies residues 80–83 (TDFV).

The protein belongs to the EF-Ts family.

It is found in the cytoplasm. Associates with the EF-Tu.GDP complex and induces the exchange of GDP to GTP. It remains bound to the aminoacyl-tRNA.EF-Tu.GTP complex up to the GTP hydrolysis stage on the ribosome. The polypeptide is Elongation factor Ts (Caldicellulosiruptor bescii (strain ATCC BAA-1888 / DSM 6725 / KCTC 15123 / Z-1320) (Anaerocellum thermophilum)).